The following is a 349-amino-acid chain: DNA-directed RNA polymerase subunit Rpo1N (349 aa).

A disordered region spans residues 306-349 (EDEGEEFAGEQATNLSESADDRMDRDRPSSHGAAPIDVPEVGDD). The span at 324–334 (ADDRMDRDRPS) shows a compositional bias: basic and acidic residues.

It belongs to the RNA polymerase beta' chain family. Part of the RNA polymerase complex.

It localises to the cytoplasm. The enzyme catalyses RNA(n) + a ribonucleoside 5'-triphosphate = RNA(n+1) + diphosphate. DNA-dependent RNA polymerase (RNAP) catalyzes the transcription of DNA into RNA using the four ribonucleoside triphosphates as substrates. Forms the clamp head domain. This is DNA-directed RNA polymerase subunit Rpo1N from Halococcus morrhuae (Micrococcus morrhuae).